A 206-amino-acid chain; its full sequence is MHNDFNLLILSGPSGAGKSTLTKYLQEKIPKTHFSLSTTTRKPREGEVDGLHYNFVSEEEFKQGIEKGQFLEWAIVHNHYYGTSKIPVEKALKEGKIVIFDIDVQGHEILKKHYPNACSVFISTKNQEILKERLLLRGTDSKETIEKRLINAYKEMQCLESFDYLIINEDLEKSKEIILSIAKTLVHRLKAFNFEKICKAWKNESL.

A Guanylate kinase-like domain is found at 5-183; the sequence is FNLLILSGPS…SKEIILSIAK (179 aa). 12 to 19 is an ATP binding site; it reads GPSGAGKS.

This sequence belongs to the guanylate kinase family.

Its subcellular location is the cytoplasm. It catalyses the reaction GMP + ATP = GDP + ADP. Its function is as follows. Essential for recycling GMP and indirectly, cGMP. In Helicobacter pylori (strain HPAG1), this protein is Guanylate kinase.